Here is a 427-residue protein sequence, read N- to C-terminus: 3-phosphoshikimate 1-carboxyvinyltransferase (427 aa).

The 3-phosphoshikimate site is built by K22, S23, and R27. K22 serves as a coordination point for phosphoenolpyruvate. Phosphoenolpyruvate-binding residues include G96 and R124. Positions 169, 170, 171, 197, 313, 336, and 340 each coordinate 3-phosphoshikimate. Q171 lines the phosphoenolpyruvate pocket. Residue D313 is the Proton acceptor of the active site. Phosphoenolpyruvate-binding residues include R344, R386, and K411.

The protein belongs to the EPSP synthase family. In terms of assembly, monomer.

It localises to the cytoplasm. It carries out the reaction 3-phosphoshikimate + phosphoenolpyruvate = 5-O-(1-carboxyvinyl)-3-phosphoshikimate + phosphate. It participates in metabolic intermediate biosynthesis; chorismate biosynthesis; chorismate from D-erythrose 4-phosphate and phosphoenolpyruvate: step 6/7. Its function is as follows. Catalyzes the transfer of the enolpyruvyl moiety of phosphoenolpyruvate (PEP) to the 5-hydroxyl of shikimate-3-phosphate (S3P) to produce enolpyruvyl shikimate-3-phosphate and inorganic phosphate. The chain is 3-phosphoshikimate 1-carboxyvinyltransferase from Escherichia coli O17:K52:H18 (strain UMN026 / ExPEC).